Here is a 195-residue protein sequence, read N- to C-terminus: dITP/XTP pyrophosphatase (195 aa).

8–13 (SNNQGK) is a binding site for substrate. Residues Glu-39 and Asp-68 each contribute to the Mg(2+) site. The active-site Proton acceptor is the Asp-68. Substrate contacts are provided by residues Ser-69, 149–152 (FGYD), Lys-172, and 177–178 (HR).

Belongs to the HAM1 NTPase family. In terms of assembly, homodimer. The cofactor is Mg(2+).

The enzyme catalyses XTP + H2O = XMP + diphosphate + H(+). The catalysed reaction is dITP + H2O = dIMP + diphosphate + H(+). It carries out the reaction ITP + H2O = IMP + diphosphate + H(+). In terms of biological role, pyrophosphatase that catalyzes the hydrolysis of nucleoside triphosphates to their monophosphate derivatives, with a high preference for the non-canonical purine nucleotides XTP (xanthosine triphosphate), dITP (deoxyinosine triphosphate) and ITP. Seems to function as a house-cleaning enzyme that removes non-canonical purine nucleotides from the nucleotide pool, thus preventing their incorporation into DNA/RNA and avoiding chromosomal lesions. The polypeptide is dITP/XTP pyrophosphatase (Staphylococcus aureus (strain Mu50 / ATCC 700699)).